Reading from the N-terminus, the 126-residue chain is Holo-[acyl-carrier-protein] synthase (126 aa).

Residues Asp9 and Glu58 each coordinate Mg(2+).

It belongs to the P-Pant transferase superfamily. AcpS family. Mg(2+) serves as cofactor.

The protein resides in the cytoplasm. The catalysed reaction is apo-[ACP] + CoA = holo-[ACP] + adenosine 3',5'-bisphosphate + H(+). Transfers the 4'-phosphopantetheine moiety from coenzyme A to a Ser of acyl-carrier-protein. This chain is Holo-[acyl-carrier-protein] synthase, found in Klebsiella pneumoniae (strain 342).